Here is a 943-residue protein sequence, read N- to C-terminus: MYLSRNPSGAALAAILVALILSCNFPSSTAGIEYSDVLPDSFPSAPAESLPHFLLEPEDAYIVKNKPVELVCKANPATQIYFKCNGEWVNQNDHITKERVDDVTGLVVREVQIEVSRQQVEELFGLEDYWCQCVAWSSAGTTKSKRSYVRIAYLRKNFDQEPLGKEVALEQEALLQCRPPEGVPPAEVEWLKNEEIIDPTKDTNFLITIDHNLIIKQARLSDTANYTCVSKNIVAKRRSTTATVIVFVNGGWSSWTEWSPCNNRCGHGWQKRTRTCTNPAPLNGGTMCEGQQYQKFACNTMCPVDGGWTEWSKWSACSTECTHWRSRECNAPTPKNGGKDCSGMLLDSKNCTDGLCMQNKRVLGETKSRLLESTGDVALYAGLVVAIFIVIILLMAVGIVVYRRNCREFDTDITDSSAALTGGFHPVNFKTSRHDNSQLIHPAMQPDLTANAGIYRGNMYALQDSADKIPMTNSPLLDPLPNLKIKVYNSSTVGSSPGIHDGNNLLGTKPTGTYPSDNNIMNARNKNMSMQHLLTLPRDSSNSVTGTFGSLGGRLTFPNTGVSLLIPQGAIPQGKYYEMYLMINKRENTVLPSEGTQTILSPIITCGPTGLLLCKPVILTVPHCADINTSDWILQLKTQSHQGNWEEVVTLNEETLNTPCYCQLESHSCHTLLDQLGTYAFVGESYSRSAIKRLQLAIFAPMLCTSLEYNLKVYCVEDTPDALKEVLELEKTLGGYLVEEPKLLMFKDSYHNLRLSIHDIPHSLWRSKLMAKYQEIPFYHIWSGSQRTLHCTFTLERYSLAATELTCKICVRQVEGEGQIFQLHTLLEENVKSFDPFCSQAENSVTTHLGPYAFKIPFSIRQKICNSLDAPNSRGNDWRLLAQKLCMDRYLNYFATKASPTGVILDLWEALHQDDGDLNTLASALEEMGKSEMMLVMATDGDC.

The N-terminal stretch at 1–30 (MYLSRNPSGAALAAILVALILSCNFPSSTA) is a signal peptide. At 31-380 (GIEYSDVLPD…LESTGDVALY (350 aa)) the chain is on the extracellular side. The Ig-like domain occupies 51-148 (PHFLLEPEDA…AGTTKSKRSY (98 aa)). 9 cysteine pairs are disulfide-bonded: cysteine 72–cysteine 133, cysteine 84–cysteine 131, cysteine 177–cysteine 228, cysteine 261–cysteine 298, cysteine 265–cysteine 302, cysteine 276–cysteine 288, cysteine 317–cysteine 351, cysteine 321–cysteine 356, and cysteine 329–cysteine 341. The Ig-like C2-type domain occupies 150-245 (RIAYLRKNFD…KRRSTTATVI (96 aa)). A glycan (N-linked (GlcNAc...) asparagine) is linked at asparagine 225. TSP type-1 domains follow at residues 249 to 303 (NGGW…TMCP) and 305 to 357 (DGGW…GLCM). The N-linked (GlcNAc...) asparagine glycan is linked to asparagine 350. Residues 381–401 (AGLVVAIFIVIILLMAVGIVV) traverse the membrane as a helical segment. Over 402 to 943 (YRRNCREFDT…MLVMATDGDC (542 aa)) the chain is Cytoplasmic. Residues 542–685 (NSVTGTFGSL…LGTYAFVGES (144 aa)) enclose the ZU5 domain. Positions 688-836 (RSAIKRLQLA…LEENVKSFDP (149 aa)) are UPA domain. The region spanning 863–941 (KICNSLDAPN…EMMLVMATDG (79 aa)) is the Death domain.

This sequence belongs to the unc-5 family. Interacts (via extracellular domain) with flrt3 (via extracellular domain). Interacts with rnd1. Post-translationally, phosphorylated on cytoplasmic tyrosine residues. In the developing visual system, it is expressed within the developing optic vesicles and later become restricted to the dorsal ciliary marginal zone, a site of retinoblast proliferation and differentiation.

The protein localises to the cell membrane. In terms of biological role, plays a role in cell-cell adhesion during embryonic development. Receptor for netrin required for axon guidance. Mediates axon repulsion of neuronal growth cones in the developing nervous system upon ligand binding. This is Netrin receptor UNC5B-a (unc5b-a) from Xenopus laevis (African clawed frog).